Here is a 100-residue protein sequence, read N- to C-terminus: Large ribosomal subunit protein uL23 (100 aa).

This sequence belongs to the universal ribosomal protein uL23 family. As to quaternary structure, part of the 50S ribosomal subunit. Contacts protein L29, and trigger factor when it is bound to the ribosome.

Its function is as follows. One of the early assembly proteins it binds 23S rRNA. One of the proteins that surrounds the polypeptide exit tunnel on the outside of the ribosome. Forms the main docking site for trigger factor binding to the ribosome. This is Large ribosomal subunit protein uL23 from Vibrio cholerae serotype O1 (strain ATCC 39541 / Classical Ogawa 395 / O395).